Reading from the N-terminus, the 96-residue chain is Exodeoxyribonuclease 7 small subunit (96 aa).

A disordered region spans residues 73-96; sequence RAPEQSAANDVSAPGSAEEHDHGR.

It belongs to the XseB family. Heterooligomer composed of large and small subunits.

The protein localises to the cytoplasm. It carries out the reaction Exonucleolytic cleavage in either 5'- to 3'- or 3'- to 5'-direction to yield nucleoside 5'-phosphates.. In terms of biological role, bidirectionally degrades single-stranded DNA into large acid-insoluble oligonucleotides, which are then degraded further into small acid-soluble oligonucleotides. The protein is Exodeoxyribonuclease 7 small subunit of Acidothermus cellulolyticus (strain ATCC 43068 / DSM 8971 / 11B).